The sequence spans 337 residues: HTH-type transcriptional repressor PurR (337 aa).

In terms of domain architecture, HTH lacI-type spans alanine 2–cysteine 56. Positions isoleucine 4–asparagine 23 form a DNA-binding region, H-T-H motif. A DNA-binding region spans residues serine 48–cysteine 56. Phenylalanine 73, lysine 189, threonine 191, phenylalanine 220, and aspartate 276 together coordinate hypoxanthine.

Homodimer.

Its pathway is purine metabolism; purine nucleotide biosynthesis [regulation]. Functionally, is the main repressor of the genes involved in the de novo synthesis of purine nucleotides, regulating purB, purC, purEK, purF, purHD, purL, purMN and guaBA expression. PurR is allosterically activated to bind its cognate DNA by binding the purine corepressors, hypoxanthine or guanine, thereby effecting transcription repression. The chain is HTH-type transcriptional repressor PurR from Aliivibrio fischeri (strain MJ11) (Vibrio fischeri).